Here is a 377-residue protein sequence, read N- to C-terminus: Actin-related protein T2 (377 aa).

It belongs to the actin family.

Its subcellular location is the cytoplasm. It is found in the cytoskeleton. This is Actin-related protein T2 (Actrt2) from Mus musculus (Mouse).